The sequence spans 209 residues: Uracil phosphoribosyltransferase (209 aa).

Residues arginine 79, arginine 104, and 131-139 each bind 5-phospho-alpha-D-ribose 1-diphosphate; that span reads DPMLATGAS. Uracil contacts are provided by residues isoleucine 194 and 199 to 201; that span reads GDA. Aspartate 200 serves as a coordination point for 5-phospho-alpha-D-ribose 1-diphosphate.

It belongs to the UPRTase family. The cofactor is Mg(2+).

The catalysed reaction is UMP + diphosphate = 5-phospho-alpha-D-ribose 1-diphosphate + uracil. It functions in the pathway pyrimidine metabolism; UMP biosynthesis via salvage pathway; UMP from uracil: step 1/1. Its activity is regulated as follows. Allosterically activated by GTP. Functionally, catalyzes the conversion of uracil and 5-phospho-alpha-D-ribose 1-diphosphate (PRPP) to UMP and diphosphate. The polypeptide is Uracil phosphoribosyltransferase (Staphylococcus saprophyticus subsp. saprophyticus (strain ATCC 15305 / DSM 20229 / NCIMB 8711 / NCTC 7292 / S-41)).